A 156-amino-acid chain; its full sequence is Large ribosomal subunit protein uL15 (156 aa).

Residues 25 to 48 (RGIGCGKGKTSGRGHKGQKARSGV) form a disordered region. The span at 34–43 (TSGRGHKGQK) shows a compositional bias: basic residues.

The protein belongs to the universal ribosomal protein uL15 family. As to quaternary structure, part of the 50S ribosomal subunit.

Functionally, binds to the 23S rRNA. This Wolbachia pipientis subsp. Culex pipiens (strain wPip) protein is Large ribosomal subunit protein uL15.